Consider the following 399-residue polypeptide: 26S proteasome regulatory subunit S10B homolog B (399 aa).

180 to 187 (GPPGTGKT) provides a ligand contact to ATP. K203 participates in a covalent cross-link: Glycyl lysine isopeptide (Lys-Gly) (interchain with G-Cter in ubiquitin).

Belongs to the AAA ATPase family. Component of the 19S regulatory particle (RP/PA700) base subcomplex of the 26S proteasome. The 26S proteasome is composed of a core protease (CP), known as the 20S proteasome, capped at one or both ends by the 19S regulatory particle (RP/PA700). The RP/PA700 complex is composed of at least 17 different subunits in two subcomplexes, the base and the lid, which form the portions proximal and distal to the 20S proteolytic core, respectively.

It is found in the cytoplasm. It localises to the nucleus. In terms of biological role, the 26S proteasome is involved in the ATP-dependent degradation of ubiquitinated proteins. The regulatory (or ATPase) complex confers ATP dependency and substrate specificity to the 26S complex. This chain is 26S proteasome regulatory subunit S10B homolog B (RPT4B), found in Arabidopsis thaliana (Mouse-ear cress).